Consider the following 278-residue polypeptide: Ribosomal RNA small subunit methyltransferase A (278 aa).

Residues Asn-18, Leu-20, Gly-45, Glu-66, Asp-89, and Asn-110 each contribute to the S-adenosyl-L-methionine site.

This sequence belongs to the class I-like SAM-binding methyltransferase superfamily. rRNA adenine N(6)-methyltransferase family. RsmA subfamily.

The protein resides in the cytoplasm. The enzyme catalyses adenosine(1518)/adenosine(1519) in 16S rRNA + 4 S-adenosyl-L-methionine = N(6)-dimethyladenosine(1518)/N(6)-dimethyladenosine(1519) in 16S rRNA + 4 S-adenosyl-L-homocysteine + 4 H(+). Specifically dimethylates two adjacent adenosines (A1518 and A1519) in the loop of a conserved hairpin near the 3'-end of 16S rRNA in the 30S particle. May play a critical role in biogenesis of 30S subunits. The sequence is that of Ribosomal RNA small subunit methyltransferase A from Cupriavidus metallidurans (strain ATCC 43123 / DSM 2839 / NBRC 102507 / CH34) (Ralstonia metallidurans).